Consider the following 487-residue polypeptide: uncharacterized protein (487 aa).

It belongs to the UbiD family.

This is an uncharacterized protein from Aeropyrum pernix (strain ATCC 700893 / DSM 11879 / JCM 9820 / NBRC 100138 / K1).